Reading from the N-terminus, the 121-residue chain is Small ribosomal subunit protein bS16 (121 aa).

The segment covering 85-110 (REARNNPKKAEPGKKAQERAAERAAK) has biased composition (basic and acidic residues). Residues 85 to 121 (REARNNPKKAEPGKKAQERAAERAAKAAEASEAASAE) form a disordered region. Low complexity predominate over residues 111-121 (AAEASEAASAE).

This sequence belongs to the bacterial ribosomal protein bS16 family.

The sequence is that of Small ribosomal subunit protein bS16 from Azorhizobium caulinodans (strain ATCC 43989 / DSM 5975 / JCM 20966 / LMG 6465 / NBRC 14845 / NCIMB 13405 / ORS 571).